Reading from the N-terminus, the 207-residue chain is Dephospho-CoA kinase (207 aa).

The DPCK domain occupies 5-202 (VVGLTGGIGS…LQYLKLSAEK (198 aa)). 13-18 (GSGKST) serves as a coordination point for ATP.

This sequence belongs to the CoaE family.

It is found in the cytoplasm. The catalysed reaction is 3'-dephospho-CoA + ATP = ADP + CoA + H(+). It participates in cofactor biosynthesis; coenzyme A biosynthesis; CoA from (R)-pantothenate: step 5/5. Catalyzes the phosphorylation of the 3'-hydroxyl group of dephosphocoenzyme A to form coenzyme A. This Dechloromonas aromatica (strain RCB) protein is Dephospho-CoA kinase.